The chain runs to 728 residues: Protein Hook homolog 1 (728 aa).

Methionine 1 is subject to N-acetylmethionine. The segment at 1-555 is sufficient for interaction with microtubules; the sequence is MEETQPPPQP…LKQKLEAHME (555 aa). One can recognise a Calponin-homology (CH) domain in the interval 12-128; the sequence is LPLCDSLMIW…RLLQLILGCA (117 aa). Coiled coils occupy residues 169-434 and 477-658; these read PNDA…RCSQ and LRLQ…AKFR. The tract at residues 169 to 444 is sufficient for homodimerization, interaction wit HOOK2, HOOK3 and AP4M1; sequence PNDAVGELEQ…VQQDHLNQTD (276 aa). Serine 235 carries the post-translational modification Phosphoserine. The tract at residues 481-512 is disordered; it reads QEGSENERIEELQEQLEQKHRKMNELETEQRL. The segment covering 503 to 512 has biased composition (basic and acidic residues); it reads MNELETEQRL. Positions 657-728 are sufficient for interaction with AKTIP and VPS18; the sequence is FRDYEEKLIV…SVKVPATTSD (72 aa). At threonine 699 the chain carries Phosphothreonine. Residues serine 719 and serine 727 each carry the phosphoserine modification.

Belongs to the hook family. As to quaternary structure, self-associates. Component of the FTS/Hook/FHIP complex (FHF complex), composed of AKTIP/FTS, FHIP1B, and one or more members of the Hook family of proteins HOOK1, HOOK2, and HOOK3. Interacts directly with AKTIP/FTS, HOOK2 and HOOK3. Associates with several subunits of the homotypic vesicular sorting complex (the HOPS complex) including VPS16, VPS18, VPS39 and VPS41; these interactions may be indirect. Interacts with CCDC181. Interacts (via coiled-coil region) with RIMBP3 (via C-terminus). Interacts with LRGUK (via guanylate kinase-like domain). Interacts with microtubules. May interact with CLN3. Interacts with AP4M1; the interaction is direct, mediates the interaction between FTS-Hook-FHIP (FHF) complex and AP-4 and the perinuclear distribution of AP-4.

Its subcellular location is the cytoplasm. It localises to the cytoskeleton. Its function is as follows. Component of the FTS/Hook/FHIP complex (FHF complex). The FHF complex may function to promote vesicle trafficking and/or fusion via the homotypic vesicular protein sorting complex (the HOPS complex). FHF complex promotes the distribution of AP-4 complex to the perinuclear area of the cell. Required for spermatid differentiation. Probably involved in the positioning of the microtubules of the manchette and the flagellum in relation to the membrane skeleton. The polypeptide is Protein Hook homolog 1 (Homo sapiens (Human)).